The sequence spans 325 residues: MSWLTPDLIDILLSILKAVVILLVVVTCGAFMSFGERRLLGLFQNRYGPNRVGWGGSLQLVADMIKMFFKEDWIPKFSDRVIFTLAPMIAFTSLLLAFAIVPVSPTWVVADLNIGILFFLMMAGLAVYAVLFAGWSSNNKYSLLGAMRASAQTLSYEVFLGLSLMGVVAQAGSFNMTDIVNNQADIWNVIPQFFGFVTFAIAGVAVCHRHPFDQPEAEQELADGYHIEYSGMKFGLFFVGEYIGIVTISALMVTLFFGGWHGPFLPPFIWFALKTAFFMMMFILIRASLPRPRYDQVMSFGWKVCLPLTLVNLLVTAAVILWQAQ.

The next 8 membrane-spanning stretches (helical) occupy residues 11-31, 81-101, 114-134, 154-174, 186-206, 237-257, 265-285, and 304-324; these read ILLSILKAVVILLVVVTCGAF, VIFTLAPMIAFTSLLLAFAIV, IGILFFLMMAGLAVYAVLFAG, LSYEVFLGLSLMGVVAQAGSF, IWNVIPQFFGFVTFAIAGVAV, FFVGEYIGIVTISALMVTLFF, LPPFIWFALKTAFFMMMFILI, and VCLPLTLVNLLVTAAVILWQA.

This sequence belongs to the complex I subunit 1 family. NDH-1 is composed of 13 different subunits. Subunits NuoA, H, J, K, L, M, N constitute the membrane sector of the complex.

The protein resides in the cell inner membrane. It carries out the reaction a quinone + NADH + 5 H(+)(in) = a quinol + NAD(+) + 4 H(+)(out). In terms of biological role, NDH-1 shuttles electrons from NADH, via FMN and iron-sulfur (Fe-S) centers, to quinones in the respiratory chain. The immediate electron acceptor for the enzyme in this species is believed to be ubiquinone. Couples the redox reaction to proton translocation (for every two electrons transferred, four hydrogen ions are translocated across the cytoplasmic membrane), and thus conserves the redox energy in a proton gradient. This subunit may bind ubiquinone. The sequence is that of NADH-quinone oxidoreductase subunit H from Enterobacter sp. (strain 638).